The chain runs to 405 residues: Phosphoglycerate kinase (405 aa).

Residues 23 to 25, R39, 62 to 65, R121, and R154 each bind substrate; these read DFN and HLGR. Residues K207, G298, E329, and 355–358 contribute to the ATP site; that span reads GGDT.

Belongs to the phosphoglycerate kinase family. As to quaternary structure, monomer.

Its subcellular location is the cytoplasm. It carries out the reaction (2R)-3-phosphoglycerate + ATP = (2R)-3-phospho-glyceroyl phosphate + ADP. It functions in the pathway carbohydrate degradation; glycolysis; pyruvate from D-glyceraldehyde 3-phosphate: step 2/5. The sequence is that of Phosphoglycerate kinase from Campylobacter hominis (strain ATCC BAA-381 / DSM 21671 / CCUG 45161 / LMG 19568 / NCTC 13146 / CH001A).